A 581-amino-acid chain; its full sequence is MARVYMETMIQKCVSFSQIKQLQSHFLTAGHFQSSFLRSRLLERCAISPFGDLSFAVQIFRYIPKPLTNDWNAIIRGFAGSSHPSLAFSWYRSMLQQSSSSSAICRVDALTCSFTLKACARALCSSAMDQLHCQINRRGLSADSLLCTTLLDAYSKNGDLISAYKLFDEMPVRDVASWNALIAGLVSGNRASEAMELYKRMETEGIRRSEVTVVAALGACSHLGDVKEGENIFHGYSNDNVIVSNAAIDMYSKCGFVDKAYQVFEQFTGKKSVVTWNTMITGFAVHGEAHRALEIFDKLEDNGIKPDDVSYLAALTACRHAGLVEYGLSVFNNMACKGVERNMKHYGCVVDLLSRAGRLREAHDIICSMSMIPDPVLWQSLLGASEIYSDVEMAEIASREIKEMGVNNDGDFVLLSNVYAAQGRWKDVGRVRDDMESKQVKKIPGLSYIEAKGTIHEFYNSDKSHEQWREIYEKIDEIRFKIREDGYVAQTGLVLHDIGEEEKENALCYHSEKLAVAYGLMMMDGADEESPVRVINNLRICGDCHVVFKHISKIYKREIIVRDRVRFHRFKDGSCSCRDFW.

PPR repeat units follow at residues 67–101 (LTND…SSSS), 108–142 (DALT…GLSA), 143–173 (DSLL…MPVR), 174–208 (DVAS…GIRR), 209–239 (SEVT…YSND), 240–270 (NVIV…FTGK), 272–306 (SVVT…GIKP), 307–341 (DDVS…GVER), and 342–372 (NMKH…MSMI). The interval 377-452 (LWQSLLGASE…IPGLSYIEAK (76 aa)) is type E motif. The segment at 453–483 (GTIHEFYNSDKSHEQWREIYEKIDEIRFKIR) is type E(+) motif. Positions 484-581 (EDGYVAQTGL…DGSCSCRDFW (98 aa)) are type DYW motif.

Belongs to the PPR family. PCMP-H subfamily.

This is Pentatricopeptide repeat-containing protein At1g34160 (PCMP-H68) from Arabidopsis thaliana (Mouse-ear cress).